The chain runs to 203 residues: UPF0637 protein SSP1683 (203 aa).

Belongs to the UPF0637 family.

The sequence is that of UPF0637 protein SSP1683 from Staphylococcus saprophyticus subsp. saprophyticus (strain ATCC 15305 / DSM 20229 / NCIMB 8711 / NCTC 7292 / S-41).